A 186-amino-acid chain; its full sequence is Protein C (186 aa).

Positions 1–12 are enriched in polar residues; it reads MSKTDWNASGPS. The segment at 1 to 43 is disordered; the sequence is MSKTDWNASGPSRPSPSAHWPSGKLWQHGQKYQTTQDRSRPPA.

This sequence belongs to the morbillivirus protein C family. As to quaternary structure, interacts with the phosphoprotein (via C-terminus); this interaction allows C to associate with the ribonucleocapsid.

It is found in the host nucleus. The protein localises to the host cytoplasmic vesicle. Ribonucleocapsid-associated protein that interacts with the phosphoprotein (P), thereby increasing replication accuracy and processivity of the polymerase complex. The chain is Protein C (P/V/C) from Homo sapiens (Human).